The following is a 641-amino-acid chain: Sodium-dependent nutrient amino acid transporter 1 (641 aa).

The disordered stretch occupies residues 1–36 (MELKGVQPSNGSANGNGTTNAASTEKTDAEKHTPER). At 1–38 (MELKGVQPSNGSANGNGTTNAASTEKTDAEKHTPERTN) the chain is on the cytoplasmic side. A compositionally biased stretch (low complexity) spans 9-24 (SNGSANGNGTTNAAST). The segment covering 25–35 (EKTDAEKHTPE) has biased composition (basic and acidic residues). Transmembrane regions (helical) follow at residues 39–59 (WGNG…LGNV), 72–92 (GAFL…MYYL), and 109–129 (SVVP…ICII). Residues Asn-183 and Asn-188 are each glycosylated (N-linked (GlcNAc...) asparagine). 9 consecutive transmembrane segments (helical) span residues 229–249 (PDWK…LVIM), 258–278 (AAYF…IRAV), 307–327 (AVVQ…MFAS), 341–361 (IVTT…FAIL), 401–421 (LFSV…IVAL), 441–461 (VALI…TPGG), 474–494 (TYVV…VYGL), 516–536 (CWSF…MVTI), and 552–572 (IAGW…GLWY).

Belongs to the sodium:neurotransmitter symporter (SNF) (TC 2.A.22) family.

Its subcellular location is the membrane. Its function is as follows. Unusual broad substrate spectrum amino acid:sodium cotransporter that promotes absorption of the D isomers of essential amino acids. Neutral amino acids are the preferred substrates, especially methionine and phenylalanine. The sequence is that of Sodium-dependent nutrient amino acid transporter 1 from Drosophila erecta (Fruit fly).